The sequence spans 681 residues: Envelope glycoprotein (681 aa).

Residues 1-18 (MKTIYFLISLILIQSIKT) form the signal peptide. Residues 19–648 (LPVLEIASNS…GLGGKWWTSD (630 aa)) lie on the Extracellular side of the membrane. The receptor-binding stretch occupies residues 38 to 188 (SGTLQKTEDV…FSRQGQGYRH (151 aa)). N-linked (GlcNAc...) asparagine; by host glycans are attached at residues Asn94, Asn171, Asn190, Asn202, Asn207, Asn219, and Asn223. The segment at 223-428 (NQTCPPSLKP…PDSSPTTRPP (206 aa)) is disordered. Composition is skewed to polar residues over residues 236–260 (PTVT…MNPS) and 278–315 (PHTT…TNPS). Residues 277–455 (GPHTTLNVVT…PFLDGLINTE (179 aa)) are mucin-like region. 10 N-linked (GlcNAc...) asparagine; by host glycosylation sites follow: Asn310, Asn323, Asn336, Asn350, Asn360, Asn364, Asn381, Asn397, Asn475, and Asn487. A compositionally biased stretch (low complexity) spans 327–347 (PTTQPATLLNNTNTTPTYNTL). 2 stretches are compositionally biased toward polar residues: residues 348–365 (KYNL…TNND) and 373–394 (SEQT…TTGQ). A compositionally biased stretch (low complexity) spans 395 to 428 (DTNSTTNIIMTTSDITSKHPTNSSPDSSPTTRPP). The interval 529 to 549 (GLSWIPFFGPGIEGLYTAGLI) is fusion peptide. N-linked (GlcNAc...) asparagine; by host glycans are attached at residues Asn564 and Asn619. A helical membrane pass occupies residues 649-669 (WGVLTNLGILLLLSIAVLIAL). Residues 670–681 (SCICRIFTKYIG) lie on the Cytoplasmic side of the membrane. Residues Cys671 and Cys673 are each lipidated (S-palmitoyl cysteine; by host).

This sequence belongs to the filoviruses glycoprotein family. As to quaternary structure, homotrimer; each monomer consists of a GP1 and a GP2 subunit linked by disulfide bonds. The resulting peplomers (GP1,2) protrude from the virus surface as spikes. GP1,2 interacts with human CD209 and CLEC4M (collectively referred to as DC-SIGN(R)). Asialoglycoprotein receptor (ASGP-R) may be a liver-specific receptor for GP1,2. Members of the Tyro3 receptor tyrosine kinase family may be cell entry factors interacting with GP1,2. N-glycosylated. Post-translationally, O-glycosylated in the mucin-like region. In terms of processing, specific enzymatic cleavages in vivo yield mature proteins. The precursor is processed into GP1 and GP2 by host cell furin in the trans Golgi, and maybe by other host proteases, to yield the mature GP1 and GP2 proteins. The cleavage site corresponds to the furin optimal cleavage sequence [KR]-X-[KR]-R. GP1 is phosphorylated on serine residues between residues 260 and 273.

It localises to the virion membrane. Its subcellular location is the host cell membrane. Functionally, GP1 is responsible for binding to the receptor(s) on target cells. Interacts with CD209/DC-SIGN and CLEC4M/DC-SIGNR which act as cofactors for virus entry into the host cell. Binding to CD209 and CLEC4M, which are respectively found on dendritic cells (DCs), and on endothelial cells of liver sinusoids and lymph node sinuses, facilitate infection of macrophages and endothelial cells. These interactions not only facilitate virus cell entry, but also allow capture of viral particles by DCs and subsequent transmission to susceptible cells without DCs infection (trans infection). In terms of biological role, GP2 acts as a class I viral fusion protein. Under the current model, the protein has at least 3 conformational states: pre-fusion native state, pre-hairpin intermediate state, and post-fusion hairpin state. During viral and target cell membrane fusion, the coiled coil regions (heptad repeats) assume a trimer-of-hairpins structure, positioning the fusion peptide in close proximity to the C-terminal region of the ectodomain. The formation of this structure appears to drive apposition and subsequent fusion of viral and target cell membranes. Responsible for penetration of the virus into the cell cytoplasm by mediating the fusion of the membrane of the endocytosed virus particle with the endosomal membrane. Low pH in endosomes induces an irreversible conformational change in GP2, releasing the fusion hydrophobic peptide. This chain is Envelope glycoprotein (GP), found in Chlorocebus aethiops (Green monkey).